We begin with the raw amino-acid sequence, 89 residues long: Abortive infection protein (89 aa).

It localises to the cell membrane. Its function is as follows. ABI may interact with a target in the cell membrane, which could be the product of the host's cmrA gene, and cause disruption of the cellular membrane such that lysis of the infected cell and death of the infecting phage would result. This is Abortive infection protein (abi) from Escherichia coli.